The chain runs to 151 residues: Deoxyuridine 5'-triphosphate nucleotidohydrolase (151 aa).

Residues 70–72 (RSG), Asn83, 87–89 (LID), and Met97 contribute to the substrate site.

It belongs to the dUTPase family. Requires Mg(2+) as cofactor.

It catalyses the reaction dUTP + H2O = dUMP + diphosphate + H(+). It participates in pyrimidine metabolism; dUMP biosynthesis; dUMP from dCTP (dUTP route): step 2/2. This enzyme is involved in nucleotide metabolism: it produces dUMP, the immediate precursor of thymidine nucleotides and it decreases the intracellular concentration of dUTP so that uracil cannot be incorporated into DNA. The sequence is that of Deoxyuridine 5'-triphosphate nucleotidohydrolase from Pseudomonas putida (strain ATCC 47054 / DSM 6125 / CFBP 8728 / NCIMB 11950 / KT2440).